A 173-amino-acid chain; its full sequence is uncharacterized protein (173 aa).

Helical transmembrane passes span 9–29 (FSIC…LLCV), 32–52 (ICSA…TFFH), 100–120 (MFLC…SFIV), and 127–147 (FLFL…GLYP).

Its subcellular location is the membrane. This is an uncharacterized protein from Saccharomyces cerevisiae (strain ATCC 204508 / S288c) (Baker's yeast).